The sequence spans 37 residues: Cytochrome b6-f complex subunit 5 (37 aa).

Residues 5–25 (ILLGIVLGMVVVTLAGLFVAA) form a helical membrane-spanning segment.

It belongs to the PetG family. As to quaternary structure, the 4 large subunits of the cytochrome b6-f complex are cytochrome b6, subunit IV (17 kDa polypeptide, PetD), cytochrome f and the Rieske protein, while the 4 small subunits are PetG, PetL, PetM and PetN. The complex functions as a dimer.

The protein resides in the cellular thylakoid membrane. Functionally, component of the cytochrome b6-f complex, which mediates electron transfer between photosystem II (PSII) and photosystem I (PSI), cyclic electron flow around PSI, and state transitions. PetG is required for either the stability or assembly of the cytochrome b6-f complex. The polypeptide is Cytochrome b6-f complex subunit 5 (Synechococcus sp. (strain JA-2-3B'a(2-13)) (Cyanobacteria bacterium Yellowstone B-Prime)).